The primary structure comprises 268 residues: uncharacterized protein (268 aa).

To yeast YKR075c.

This is an uncharacterized protein from Saccharomyces cerevisiae (strain ATCC 204508 / S288c) (Baker's yeast).